A 310-amino-acid chain; its full sequence is Iron ABC transporter substrate-binding lipoprotein MtsA (310 aa).

The first 20 residues, 1-20 (MGKKMSLILGAFLSVFLLVA), serve as a signal peptide directing secretion. Cys-21 carries N-palmitoyl cysteine lipidation. A lipid anchor (S-diacylglycerol cysteine) is attached at Cys-21. The Fe(2+) site is built by His-68, His-140, Glu-206, and Asp-281.

This sequence belongs to the bacterial solute-binding protein 9 family. Lipoprotein receptor antigen (Lrai) subfamily.

It is found in the cell membrane. Its function is as follows. Part of the ATP-binding cassette (ABC) transport system MtsABC involved in iron import. Binds iron with high affinity and specificity and delivers it to the membrane permease for translocation into the cytoplasm. Has low affinity for Zn(2+) and Cu(2+). The chain is Iron ABC transporter substrate-binding lipoprotein MtsA (mtsA) from Streptococcus pyogenes serotype M6 (strain ATCC BAA-946 / MGAS10394).